Here is a 377-residue protein sequence, read N- to C-terminus: Protein RecA (377 aa).

An ATP-binding site is contributed by 76–83 (GPESSGKT).

Belongs to the RecA family.

The protein localises to the cytoplasm. Its function is as follows. Can catalyze the hydrolysis of ATP in the presence of single-stranded DNA, the ATP-dependent uptake of single-stranded DNA by duplex DNA, and the ATP-dependent hybridization of homologous single-stranded DNAs. It interacts with LexA causing its activation and leading to its autocatalytic cleavage. The sequence is that of Protein RecA from Corynebacterium aurimucosum (strain ATCC 700975 / DSM 44827 / CIP 107346 / CN-1) (Corynebacterium nigricans).